We begin with the raw amino-acid sequence, 348 residues long: Anthranilate phosphoribosyltransferase (348 aa).

5-phospho-alpha-D-ribose 1-diphosphate-binding positions include Gly84, 87–88 (GD), Thr92, 94–97 (NITT), 112–120 (KHGNRSVSS), and Ser124. Residue Gly84 participates in anthranilate binding. Thr96 is a binding site for Mg(2+). Asn115 contacts anthranilate. Arg170 lines the anthranilate pocket. The Mg(2+) site is built by Asp228 and Glu229.

It belongs to the anthranilate phosphoribosyltransferase family. In terms of assembly, homodimer. Mg(2+) is required as a cofactor.

The catalysed reaction is N-(5-phospho-beta-D-ribosyl)anthranilate + diphosphate = 5-phospho-alpha-D-ribose 1-diphosphate + anthranilate. It functions in the pathway amino-acid biosynthesis; L-tryptophan biosynthesis; L-tryptophan from chorismate: step 2/5. Functionally, catalyzes the transfer of the phosphoribosyl group of 5-phosphorylribose-1-pyrophosphate (PRPP) to anthranilate to yield N-(5'-phosphoribosyl)-anthranilate (PRA). The protein is Anthranilate phosphoribosyltransferase of Corynebacterium glutamicum (strain R).